We begin with the raw amino-acid sequence, 739 residues long: DEAD-box ATP-dependent RNA helicase 32 (739 aa).

Positions 71–99 (RKFAQLPISDKTKRGLKDAKYVDMTDVQS) match the Q motif motif. In terms of domain architecture, Helicase ATP-binding spans 102-277 (IPHALCGRDI…RLSLRDPEYI (176 aa)). Residue 115-122 (ARTGSGKT) coordinates ATP. The DEAD box motif lies at 225 to 228 (DEAD). The Helicase C-terminal domain occupies 303 to 461 (KLDMLWSFIK…EVSRLLAALL (159 aa)). Residues 643–689 (GAEMRKADIEDKKVDKERRREKRMKQKIKRKRGAMEDEEEEEEEDHD) adopt a coiled-coil conformation. A disordered region spans residues 656–725 (VDKERRREKR…GGKINTDSLS (70 aa)). A compositionally biased stretch (basic residues) spans 661–674 (RREKRMKQKIKRKR). A compositionally biased stretch (acidic residues) spans 678–688 (EDEEEEEEEDH).

This sequence belongs to the DEAD box helicase family. DDX10/DBP4 subfamily.

It catalyses the reaction ATP + H2O = ADP + phosphate + H(+). This is DEAD-box ATP-dependent RNA helicase 32 (RH32) from Arabidopsis thaliana (Mouse-ear cress).